A 942-amino-acid polypeptide reads, in one-letter code: Genome polyprotein (942 aa).

The Peptidase C4 domain occupies 1–90; it reads ETEITPYGEN…VDVGGLYIHN (90 aa). Catalysis depends on Cys26, which acts as the For nuclear inclusion protein A activity. The RdRp catalytic domain maps to 349–472; it reads EWFIDADGSQ…NANEEAKEVV (124 aa). Positions 633 to 678 are disordered; that stretch reads NATSTSDTIPPARNVGADTTTPAKANPPSGRRPSSRSLIDNSIGGN. Residues 659-669 are compositionally biased toward low complexity; it reads PPSGRRPSSRS.

Belongs to the potyviridae genome polyprotein family. In terms of processing, genome polyprotein of potyviruses undergoes post-translational proteolytic processing by the main proteinase NIa-pro resulting in the production of at least ten individual proteins. The P1 proteinase and the HC-pro cleave only their respective C-termini autocatalytically. 6K1 is essential for proper proteolytic separation of P3 from CI.

It localises to the virion. It carries out the reaction RNA(n) + a ribonucleoside 5'-triphosphate = RNA(n+1) + diphosphate. It catalyses the reaction Hydrolyzes glutaminyl bonds, and activity is further restricted by preferences for the amino acids in P6 - P1' that vary with the species of potyvirus, e.g. Glu-Xaa-Xaa-Tyr-Xaa-Gln-|-(Ser or Gly) for the enzyme from tobacco etch virus. The natural substrate is the viral polyprotein, but other proteins and oligopeptides containing the appropriate consensus sequence are also cleaved.. Has RNA-binding and proteolytic activities. Its function is as follows. An RNA-dependent RNA polymerase that plays an essential role in the virus replication. Functionally, involved in aphid transmission, cell-to-cell and systemis movement, encapsidation of the viral RNA and in the regulation of viral RNA amplification. This chain is Genome polyprotein, found in Brome streak virus (strain German) (BStV).